We begin with the raw amino-acid sequence, 289 residues long: Putative 2-aminoethylphosphonate transport system permease protein PhnU (289 aa).

Transmembrane regions (helical) follow at residues 19–39 (WLLLPLLALATLFFWPLSLIV), 76–96 (FFATAGCLLLGSVMSLILVFI), 111–131 (FIALPTFLITLAFTFIYGSAG), 150–170 (FLYSMQGVILAEITVFTPLVM), 202–222 (VIFPAALPALMASGSLCLLLT), and 254–274 (YTVACMIALINIVLSLGLFSL). The region spanning 68–275 (LLNTLQIAFF…VLSLGLFSLY (208 aa)) is the ABC transmembrane type-1 domain.

The protein belongs to the binding-protein-dependent transport system permease family.

It is found in the cell inner membrane. Its function is as follows. Probably part of the PhnSTUV complex (TC 3.A.1.11.5) involved in 2-aminoethylphosphonate import. Probably responsible for the translocation of the substrate across the membrane. In Salmonella typhi, this protein is Putative 2-aminoethylphosphonate transport system permease protein PhnU (phnU).